Reading from the N-terminus, the 902-residue chain is Cytosolic 10-formyltetrahydrofolate dehydrogenase (902 aa).

Residues 1 to 310 (MKIAVIGQSL…PASQYFKTAD (310 aa)) form a hydrolase domain region. 88–90 (QFI) lines the (6R)-10-formyltetrahydrofolate pocket. Catalysis depends on His-106, which acts as the Proton donor. Residue Asp-142 participates in (6R)-10-formyltetrahydrofolate binding. Residues 318–395 (EEEQKVSEEI…EFIQMVVRRM (78 aa)) form the Carrier domain. O-(pantetheine 4'-phosphoryl)serine is present on Ser-354. Residues 417–902 (TVKIPHQLFI…LKTKAVTIEY (486 aa)) form an aldehyde dehydrogenase domain region. NADP(+) contacts are provided by residues 571–573 (IPW), 597–600 (KPAQ), 630–635 (GSLIGQ), 650–651 (GS), and 673–674 (EL). Catalysis depends on Glu-673, which acts as the Proton acceptor. The active-site Proton donor is the Cys-707. Residues Lys-757 and 804-806 (ESF) contribute to the NADP(+) site.

The protein in the N-terminal section; belongs to the GART family. It in the C-terminal section; belongs to the aldehyde dehydrogenase family. ALDH1L subfamily. In terms of assembly, homotetramer. In terms of processing, phosphopantetheinylation at Ser-354 by AASDHPPT is required for the formyltetrahydrofolate dehydrogenase activity.

The protein resides in the cytoplasm. The protein localises to the cytosol. The enzyme catalyses (6R)-10-formyltetrahydrofolate + NADP(+) + H2O = (6S)-5,6,7,8-tetrahydrofolate + CO2 + NADPH + H(+). In terms of biological role, cytosolic 10-formyltetrahydrofolate dehydrogenase that catalyzes the NADP(+)-dependent conversion of 10-formyltetrahydrofolate to tetrahydrofolate and carbon dioxide. May also have an NADP(+)-dependent aldehyde dehydrogenase activity towards formaldehyde, acetaldehyde, propionaldehyde, and benzaldehyde. The sequence is that of Cytosolic 10-formyltetrahydrofolate dehydrogenase (aldh1l1) from Xenopus laevis (African clawed frog).